The chain runs to 468 residues: Peroxisome proliferator-activated receptor alpha (468 aa).

A DNA-binding region (nuclear receptor) is located at residues 99-173 (NIECRICGDK…VGMSHNAIRF (75 aa)). 2 NR C4-type zinc fingers span residues 102–122 (CRIC…CEGC) and 139–161 (CDRS…FHKC). The region spanning 239 to 466 (FVIHDMETLC…HPLLQEIYRD (228 aa)) is the NR LBD domain. The segment at 304 to 433 (DQVTLLKYGV…PKLLQKMVDL (130 aa)) is required for heterodimerization with RXRA.

The protein belongs to the nuclear hormone receptor family. NR1 subfamily. In terms of assembly, heterodimer; with RXRA. This heterodimerization is required for DNA binding and transactivation activity. Interacts with NCOA3 coactivator. Interacts with CITED2; the interaction stimulates its transcriptional activity. Also interacts with PPARBP in vitro. Interacts with AKAP13, LPIN1, PRDM16 and coactivator NCOA6. Interacts with ASXL1 and ASXL2. Interacts with PER2. Interacts with SIRT1; the interaction seems to be modulated by NAD(+) levels. Interacts with CRY1 and CRY2. In hepatocytes, interacts with PAQR3 and HUWE1; the interactions promote PPARA poylubiquitination and HUWE1-mediated degradation. Post-translationally, ubiquitinated by E3 ubiquitin-protein ligase HUWE1; leading to proteasomal degradation. Phosphorylated. As to expression, highly expressed in liver, kidney and heart. Very weakly expressed in brain and testis.

The protein resides in the nucleus. Its function is as follows. Ligand-activated transcription factor. Key regulator of lipid metabolism. Activated by the endogenous ligand 1-palmitoyl-2-oleoyl-sn-glycerol-3-phosphocholine (16:0/18:1-GPC). Activated by oleylethanolamide, a naturally occurring lipid that regulates satiety. Receptor for peroxisome proliferators such as hypolipidemic drugs and fatty acids. Regulates the peroxisomal beta-oxidation pathway of fatty acids. Functions as a transcription activator for the ACOX1 and P450 genes. Transactivation activity requires heterodimerization with RXRA and is antagonized by NR2C2. May be required for the propagation of clock information to metabolic pathways regulated by PER2. The polypeptide is Peroxisome proliferator-activated receptor alpha (Ppara) (Mus musculus (Mouse)).